The primary structure comprises 207 residues: Large ribosomal subunit protein uL4 (207 aa).

A disordered region spans residues 56–75; it reads EVSGTTKKPFKQKGTGNARQ.

Belongs to the universal ribosomal protein uL4 family. Part of the 50S ribosomal subunit.

Its function is as follows. One of the primary rRNA binding proteins, this protein initially binds near the 5'-end of the 23S rRNA. It is important during the early stages of 50S assembly. It makes multiple contacts with different domains of the 23S rRNA in the assembled 50S subunit and ribosome. Functionally, forms part of the polypeptide exit tunnel. The chain is Large ribosomal subunit protein uL4 from Rickettsia prowazekii (strain Madrid E).